The sequence spans 383 residues: 8-amino-7-oxononanoate synthase (383 aa).

Position 21 (R21) interacts with substrate. 108 to 109 lines the pyridoxal 5'-phosphate pocket; that stretch reads GY. Position 133 (H133) interacts with substrate. The pyridoxal 5'-phosphate site is built by S179, H207, and T233. The residue at position 236 (K236) is an N6-(pyridoxal phosphate)lysine. Residue T350 participates in substrate binding.

Belongs to the class-II pyridoxal-phosphate-dependent aminotransferase family. BioF subfamily. In terms of assembly, homodimer. The cofactor is pyridoxal 5'-phosphate.

It carries out the reaction 6-carboxyhexanoyl-[ACP] + L-alanine + H(+) = (8S)-8-amino-7-oxononanoate + holo-[ACP] + CO2. The protein operates within cofactor biosynthesis; biotin biosynthesis. Catalyzes the decarboxylative condensation of pimeloyl-[acyl-carrier protein] and L-alanine to produce 8-amino-7-oxononanoate (AON), [acyl-carrier protein], and carbon dioxide. The protein is 8-amino-7-oxononanoate synthase of Yersinia pseudotuberculosis serotype IB (strain PB1/+).